The primary structure comprises 326 residues: ATP-dependent 6-phosphofructokinase 2 (326 aa).

Glycine 14 is a binding site for ATP. An ADP-binding site is contributed by 24–28; that stretch reads RAVTR. Residues 75-76 and 105-108 each bind ATP; these read RC and GDGS. Residue aspartate 106 coordinates Mg(2+). 129-131 provides a ligand contact to substrate; the sequence is TID. Residue aspartate 131 is the Proton acceptor of the active site. Arginine 158 serves as a coordination point for ADP. Substrate-binding positions include arginine 166 and 173–175; that span reads MGR. Residues 189–191, lysine 215, and 217–219 contribute to the ADP site; these read GAE and KNS. Residues glutamate 226, arginine 250, and 256-259 each bind substrate; that span reads HLQR.

This sequence belongs to the phosphofructokinase type A (PFKA) family. ATP-dependent PFK group I subfamily. Prokaryotic clade 'B1' sub-subfamily. As to quaternary structure, homotetramer. Requires Mg(2+) as cofactor.

It localises to the cytoplasm. The catalysed reaction is beta-D-fructose 6-phosphate + ATP = beta-D-fructose 1,6-bisphosphate + ADP + H(+). It functions in the pathway carbohydrate degradation; glycolysis; D-glyceraldehyde 3-phosphate and glycerone phosphate from D-glucose: step 3/4. With respect to regulation, allosterically activated by ADP and other diphosphonucleosides, and allosterically inhibited by phosphoenolpyruvate. In terms of biological role, catalyzes the phosphorylation of D-fructose 6-phosphate to fructose 1,6-bisphosphate by ATP, the first committing step of glycolysis. The protein is ATP-dependent 6-phosphofructokinase 2 of Bacteroides thetaiotaomicron (strain ATCC 29148 / DSM 2079 / JCM 5827 / CCUG 10774 / NCTC 10582 / VPI-5482 / E50).